Reading from the N-terminus, the 287-residue chain is ATP synthase gamma chain (287 aa).

Belongs to the ATPase gamma chain family. In terms of assembly, F-type ATPases have 2 components, CF(1) - the catalytic core - and CF(0) - the membrane proton channel. CF(1) has five subunits: alpha(3), beta(3), gamma(1), delta(1), epsilon(1). CF(0) has three main subunits: a, b and c.

Its subcellular location is the cell inner membrane. In terms of biological role, produces ATP from ADP in the presence of a proton gradient across the membrane. The gamma chain is believed to be important in regulating ATPase activity and the flow of protons through the CF(0) complex. The polypeptide is ATP synthase gamma chain (Citrobacter koseri (strain ATCC BAA-895 / CDC 4225-83 / SGSC4696)).